A 387-amino-acid polypeptide reads, in one-letter code: 2-deoxystreptamine glucosyltransferase (387 aa).

The protein belongs to the glycosyltransferase group 1 family.

It catalyses the reaction 2-deoxystreptamine + UDP-N-acetyl-alpha-D-glucosamine = 2'-N-acetylparomamine + UDP + H(+). It carries out the reaction 2-deoxystreptamine + UDP-alpha-D-glucose = 2'-deamino-2'-hydroxyparomamine + UDP + H(+). It participates in antibiotic biosynthesis; kanamycin biosynthesis. Its function is as follows. Glycosyltransferase involved in the biosynthesis of kanamycin by mediating conversion of 2-deoxystreptamine (2-DOS) to 2'-N-acetylparomamine using UDP-alpha-D-glucose as sugar donor. Can also accept UDP-alpha-D-glucosamine, but with a much lower activity compared to UDP-alpha-D-glucose. The protein is 2-deoxystreptamine glucosyltransferase (kanF) of Streptomyces kanamyceticus.